The chain runs to 360 residues: Histidinol-phosphate aminotransferase (360 aa).

N6-(pyridoxal phosphate)lysine is present on Lys-222.

Belongs to the class-II pyridoxal-phosphate-dependent aminotransferase family. Histidinol-phosphate aminotransferase subfamily. Pyridoxal 5'-phosphate serves as cofactor.

It carries out the reaction L-histidinol phosphate + 2-oxoglutarate = 3-(imidazol-4-yl)-2-oxopropyl phosphate + L-glutamate. It functions in the pathway amino-acid biosynthesis; L-histidine biosynthesis; L-histidine from 5-phospho-alpha-D-ribose 1-diphosphate: step 7/9. In Haloarcula marismortui (strain ATCC 43049 / DSM 3752 / JCM 8966 / VKM B-1809) (Halobacterium marismortui), this protein is Histidinol-phosphate aminotransferase.